We begin with the raw amino-acid sequence, 740 residues long: 1,4-alpha-glucan branching enzyme GlgB (740 aa).

Catalysis depends on D409, which acts as the Nucleophile. The active-site Proton donor is E462.

Belongs to the glycosyl hydrolase 13 family. GlgB subfamily. As to quaternary structure, monomer.

It catalyses the reaction Transfers a segment of a (1-&gt;4)-alpha-D-glucan chain to a primary hydroxy group in a similar glucan chain.. It functions in the pathway glycan biosynthesis; glycogen biosynthesis. Its function is as follows. Catalyzes the formation of the alpha-1,6-glucosidic linkages in glycogen by scission of a 1,4-alpha-linked oligosaccharide from growing alpha-1,4-glucan chains and the subsequent attachment of the oligosaccharide to the alpha-1,6 position. The polypeptide is 1,4-alpha-glucan branching enzyme GlgB (Methylococcus capsulatus (strain ATCC 33009 / NCIMB 11132 / Bath)).